The chain runs to 457 residues: Ribosomal protein uS12 methylthiotransferase RimO (457 aa).

An MTTase N-terminal domain is found at 6–116 (PKVGFVSLGC…VMEAVHAALP (111 aa)). Residues Cys-15, Cys-51, Cys-80, Cys-147, Cys-151, and Cys-154 each coordinate [4Fe-4S] cluster. Residues 133–371 (LTPRHYAYLK…AKQAQISALR (239 aa)) form the Radical SAM core domain. In terms of domain architecture, TRAM spans 373–441 (ESKIGSVQQC…EHDLFGDALP (69 aa)).

The protein belongs to the methylthiotransferase family. RimO subfamily. Requires [4Fe-4S] cluster as cofactor.

The protein localises to the cytoplasm. The catalysed reaction is L-aspartate(89)-[ribosomal protein uS12]-hydrogen + (sulfur carrier)-SH + AH2 + 2 S-adenosyl-L-methionine = 3-methylsulfanyl-L-aspartate(89)-[ribosomal protein uS12]-hydrogen + (sulfur carrier)-H + 5'-deoxyadenosine + L-methionine + A + S-adenosyl-L-homocysteine + 2 H(+). Functionally, catalyzes the methylthiolation of an aspartic acid residue of ribosomal protein uS12. The polypeptide is Ribosomal protein uS12 methylthiotransferase RimO (Xanthomonas axonopodis pv. citri (strain 306)).